Reading from the N-terminus, the 244-residue chain is Methanethiol S-methyltransferase (244 aa).

Helical transmembrane passes span 7–27 (IIYG…AIGF), 41–61 (IAAP…VFAV), 90–110 (LLAS…PAVI), 120–140 (VALW…TFMI), and 181–201 (GFVV…LFAI).

Belongs to the nurim family.

The protein localises to the membrane. It carries out the reaction methanethiol + S-adenosyl-L-methionine = dimethyl sulfide + S-adenosyl-L-homocysteine + H(+). Functionally, catalyzes the methylation of methanethiol (MeSH) to yield dimethylsulphide (DMS). The polypeptide is Methanethiol S-methyltransferase (Mycobacterium tuberculosis (strain ATCC 25618 / H37Rv)).